We begin with the raw amino-acid sequence, 495 residues long: Ectonucleoside triphosphate diphosphohydrolase 8 (495 aa).

Topologically, residues Met1 to Gln8 are cytoplasmic. The helical transmembrane segment at Val9–Leu29 threads the bilayer. Topologically, residues Val30–Lys471 are extracellular. N-linked (GlcNAc...) asparagine glycosylation occurs at Asn67. Residues Cys78 and Cys102 are joined by a disulfide bond. Glu168 functions as the Proton acceptor in the catalytic mechanism. Cys246 and Cys292 are oxidised to a cystine. Residue Asn304 is glycosylated (N-linked (GlcNAc...) asparagine). Cys329 and Cys335 form a disulfide bridge. Residue Asn363 is glycosylated (N-linked (GlcNAc...) asparagine). A disulfide bridge connects residues Cys381 and Cys403. Residues Val472 to Trp492 traverse the membrane as a helical segment. Over Leu493–Asp495 the chain is Cytoplasmic.

Belongs to the GDA1/CD39 NTPase family. It depends on Ca(2+) as a cofactor. The cofactor is Mg(2+). Post-translationally, N-glycosylated.

It is found in the cell membrane. It carries out the reaction a ribonucleoside 5'-triphosphate + 2 H2O = a ribonucleoside 5'-phosphate + 2 phosphate + 2 H(+). Its activity is regulated as follows. Not inhibited by ARL 67156. Functionally, canalicular ectonucleoside NTPDase responsible for the main hepatic NTPDase activity. Ectonucleoside NTPDases catalyze the hydrolysis of gamma- and beta-phosphate residues of nucleotides, playing a central role in concentration of extracellular nucleotides. Has activity toward ATP, ADP, UTP and UDP, but not toward AMP. The polypeptide is Ectonucleoside triphosphate diphosphohydrolase 8 (ENTPD8) (Homo sapiens (Human)).